Consider the following 554-residue polypeptide: Malate synthase 1 (554 aa).

The active-site Proton acceptor is Arg177. Asp457 (proton donor) is an active-site residue. The SKL peroxisome targeting motif motif lies at 552-554 (SKL).

The protein belongs to the malate synthase family. In terms of assembly, interacts with PEX9.

Its subcellular location is the peroxisome matrix. It carries out the reaction glyoxylate + acetyl-CoA + H2O = (S)-malate + CoA + H(+). Its pathway is carbohydrate metabolism; glyoxylate cycle; (S)-malate from isocitrate: step 2/2. In terms of biological role, malate synthase which takes part in the glyoxylate cycle. MLS1 activity is essential for cells to grow on oleic acid as a sole carbon source. Two steps of the glyoxylate cycle take place in the cytosol, the splitting of isocitrate into succinate and glyoxylate, and the dehydrogenation of malate to oxaloacetate. However, the formation of malate from glyoxylate and acetyl-CoA undertaken MLS1, occurs in the peroxisomes when cells are grown on oleic acid. The source of acetyl-CoA being either peroxisomal when breaking down fatty acids, or cytosolic when extra-cellular two-carbon substrates are used, therefore, although not strictly essential, the peroxisomal localization of MLS1 appears to be advantageous for cells growing on oleic acid, in that acetyl-CoA production and utilization are thereby intimately compartmentalized together to increase efficiency. This Saccharomyces cerevisiae (strain ATCC 204508 / S288c) (Baker's yeast) protein is Malate synthase 1.